We begin with the raw amino-acid sequence, 358 residues long: G-protein coupled receptor 20 (358 aa).

Over 1-48 (MPSVSPAGPSAGAVPNATAVTTVRTNASGLEVPLFHLFARLDEELHGT) the chain is Extracellular. 2 N-linked (GlcNAc...) asparagine glycosylation sites follow: Asn16 and Asn26. A helical membrane pass occupies residues 49-69 (FPGLWLALMAVHGAIFLAGLV). Over 70–86 (LNGLALYVFCCRTRAKT) the chain is Cytoplasmic. The helical transmembrane segment at 87–107 (PSVIYTINLVVTDLLVGLSLP) threads the bilayer. The Extracellular portion of the chain corresponds to 108–125 (TRFAVYYGARGCLRCAFP). Residues 126–146 (HVLGYFLNMHCSILFLTCICV) form a helical membrane-spanning segment. The Cytoplasmic portion of the chain corresponds to 147-168 (DRYLAIVRPEGSRRCRQPACAR). The chain crosses the membrane as a helical span at residues 169-189 (AVCAFVWLAAGAVTLSVLGVT). Residues 190 to 196 (GSRPCCR) are Extracellular-facing. Residues 197 to 217 (VFALTVLEFLLPLLVISVFTG) traverse the membrane as a helical segment. Residues 218-238 (RIMCALSRPGLLHQGRQRRVR) are Cytoplasmic-facing. Residues 239-259 (AMQLLLTVLIIFLVCFTPFHA) traverse the membrane as a helical segment. Residues 260–275 (RQVAVALWPDMPHHTS) lie on the Extracellular side of the membrane. The helical transmembrane segment at 276–296 (LVVYHVAVTLSSLNSCMDPIV) threads the bilayer. At 297 to 358 (YCFVTSGFQA…TQALANGPEA (62 aa)) the chain is on the cytoplasmic side. A disordered region spans residues 315-339 (HGEREPSSGDVVSMHRSSKGSGRHH). The segment covering 330-339 (RSSKGSGRHH) has biased composition (basic residues).

It belongs to the G-protein coupled receptor 1 family. In terms of tissue distribution, ubiquitous with highest levels in intestinal tissues. In the brain detected in thalamus, putamen, and caudate, but not in frontal cortex, pons and hypothalamus.

It is found in the cell membrane. Its function is as follows. Orphan receptor with constitutive G(i) signaling activity that activate cyclic AMP. The sequence is that of G-protein coupled receptor 20 (GPR20) from Homo sapiens (Human).